Consider the following 341-residue polypeptide: UDP-3-O-acylglucosamine N-acyltransferase (341 aa).

Histidine 236 functions as the Proton acceptor in the catalytic mechanism.

It belongs to the transferase hexapeptide repeat family. LpxD subfamily. In terms of assembly, homotrimer.

The enzyme catalyses a UDP-3-O-[(3R)-3-hydroxyacyl]-alpha-D-glucosamine + a (3R)-hydroxyacyl-[ACP] = a UDP-2-N,3-O-bis[(3R)-3-hydroxyacyl]-alpha-D-glucosamine + holo-[ACP] + H(+). It participates in bacterial outer membrane biogenesis; LPS lipid A biosynthesis. Its function is as follows. Catalyzes the N-acylation of UDP-3-O-acylglucosamine using 3-hydroxyacyl-ACP as the acyl donor. Is involved in the biosynthesis of lipid A, a phosphorylated glycolipid that anchors the lipopolysaccharide to the outer membrane of the cell. In Lawsonia intracellularis (strain PHE/MN1-00), this protein is UDP-3-O-acylglucosamine N-acyltransferase.